Here is a 379-residue protein sequence, read N- to C-terminus: Glutamate 5-kinase (379 aa).

Position 15 (Lys-15) interacts with ATP. The substrate site is built by Ser-56, Asp-143, and Asn-155. Position 175–176 (Ser-175–Asp-176) interacts with ATP. The PUA domain occupies Arg-281–Arg-358.

The protein belongs to the glutamate 5-kinase family.

The protein localises to the cytoplasm. It catalyses the reaction L-glutamate + ATP = L-glutamyl 5-phosphate + ADP. The protein operates within amino-acid biosynthesis; L-proline biosynthesis; L-glutamate 5-semialdehyde from L-glutamate: step 1/2. Catalyzes the transfer of a phosphate group to glutamate to form L-glutamate 5-phosphate. This Nitrobacter winogradskyi (strain ATCC 25391 / DSM 10237 / CIP 104748 / NCIMB 11846 / Nb-255) protein is Glutamate 5-kinase.